The sequence spans 152 residues: Ribosome maturation factor RimP (152 aa).

This sequence belongs to the RimP family.

It is found in the cytoplasm. Functionally, required for maturation of 30S ribosomal subunits. This chain is Ribosome maturation factor RimP, found in Desulfitobacterium hafniense (strain DSM 10664 / DCB-2).